Here is a 176-residue protein sequence, read N- to C-terminus: Nudix hydrolase 18, mitochondrial (176 aa).

A mitochondrion-targeting transit peptide spans 1-21 (MVCLVSRTGRQSQRYNKGRRQ). The region spanning 22–153 (VVGCIPYRLK…WMKEALDVLV (132 aa)) is the Nudix hydrolase domain. The Nudix box signature appears at 60–81 (GGWELDESVEEAASRESLEEAG). Mg(2+) contacts are provided by E75 and E79.

The protein belongs to the Nudix hydrolase family. Mg(2+) serves as cofactor. Mn(2+) is required as a cofactor. In terms of tissue distribution, expressed in roots, stems and inflorescences.

It localises to the mitochondrion. In terms of biological role, probably mediates the hydrolysis of some nucleoside diphosphate derivatives. In Arabidopsis thaliana (Mouse-ear cress), this protein is Nudix hydrolase 18, mitochondrial (NUDT18).